The sequence spans 312 residues: DNA-directed RNA polymerase subunit alpha (312 aa).

The segment at 1–225 (MIEFEKPNIT…VEHFKVFESA (225 aa)) is alpha N-terminal domain (alpha-NTD). The alpha C-terminal domain (alpha-CTD) stretch occupies residues 243-312 (KEKKLEMTIE…DLGLSLRQED (70 aa)).

It belongs to the RNA polymerase alpha chain family. In terms of assembly, homodimer. The RNAP catalytic core consists of 2 alpha, 1 beta, 1 beta' and 1 omega subunit. When a sigma factor is associated with the core the holoenzyme is formed, which can initiate transcription.

It carries out the reaction RNA(n) + a ribonucleoside 5'-triphosphate = RNA(n+1) + diphosphate. In terms of biological role, DNA-dependent RNA polymerase catalyzes the transcription of DNA into RNA using the four ribonucleoside triphosphates as substrates. The chain is DNA-directed RNA polymerase subunit alpha from Lactobacillus helveticus (strain DPC 4571).